We begin with the raw amino-acid sequence, 139 residues long: Large-conductance mechanosensitive channel (139 aa).

2 helical membrane passes run V17–L37 and T88–A108.

This sequence belongs to the MscL family. Homopentamer.

The protein localises to the cell inner membrane. Channel that opens in response to stretch forces in the membrane lipid bilayer. May participate in the regulation of osmotic pressure changes within the cell. The polypeptide is Large-conductance mechanosensitive channel (Porphyromonas gingivalis (strain ATCC 33277 / DSM 20709 / CIP 103683 / JCM 12257 / NCTC 11834 / 2561)).